Consider the following 329-residue polypeptide: 1-phosphatidylinositol phosphodiesterase (329 aa).

Residues 1 to 31 form the signal peptide; that stretch reads MSNKKLILKLFICSTIFITFVFALHDKRVVA. Positions 51–194 constitute a PI-PLC X-box domain; that stretch reads NIPLARISIP…ARGKIVLLKR (144 aa). The active-site Proton acceptor is His-63. His-113 (proton donor) is an active-site residue.

It localises to the secreted. The catalysed reaction is a 1,2-diacyl-sn-glycero-3-phospho-(1D-myo-inositol) = 1D-myo-inositol 1,2-cyclic phosphate + a 1,2-diacyl-sn-glycerol. In terms of biological role, cleaves glycosylphosphatidylinositol (GPI) and phosphatidylinositol (PI) anchors but not PI phosphates. The chain is 1-phosphatidylinositol phosphodiesterase from Bacillus thuringiensis.